A 358-amino-acid chain; its full sequence is Alanine racemase (358 aa).

The Proton acceptor; specific for D-alanine role is filled by K35. K35 is subject to N6-(pyridoxal phosphate)lysine. R130 lines the substrate pocket. Y255 acts as the Proton acceptor; specific for L-alanine in catalysis. M303 contributes to the substrate binding site.

It belongs to the alanine racemase family. Requires pyridoxal 5'-phosphate as cofactor.

The enzyme catalyses L-alanine = D-alanine. It participates in amino-acid biosynthesis; D-alanine biosynthesis; D-alanine from L-alanine: step 1/1. In terms of biological role, catalyzes the interconversion of L-alanine and D-alanine. May also act on other amino acids. This chain is Alanine racemase (alr), found in Shewanella sediminis (strain HAW-EB3).